Reading from the N-terminus, the 209-residue chain is Orotate phosphoribosyltransferase (209 aa).

Residues R96, K100, H102, and 122–130 (EDLISTGGS) contribute to the 5-phospho-alpha-D-ribose 1-diphosphate site. Orotate is bound at residue S126.

It belongs to the purine/pyrimidine phosphoribosyltransferase family. PyrE subfamily. In terms of assembly, homodimer. The cofactor is Mg(2+).

The enzyme catalyses orotidine 5'-phosphate + diphosphate = orotate + 5-phospho-alpha-D-ribose 1-diphosphate. The protein operates within pyrimidine metabolism; UMP biosynthesis via de novo pathway; UMP from orotate: step 1/2. Its function is as follows. Catalyzes the transfer of a ribosyl phosphate group from 5-phosphoribose 1-diphosphate to orotate, leading to the formation of orotidine monophosphate (OMP). This Streptococcus gordonii (strain Challis / ATCC 35105 / BCRC 15272 / CH1 / DL1 / V288) protein is Orotate phosphoribosyltransferase.